The primary structure comprises 809 residues: AP-3 complex subunit beta (809 aa).

HEAT repeat units lie at residues 37–76 (YYSQNINPQQLVTLLNSRNSREVRDAMKRIISIMASDDDS), 112–151 (DPNLTLLSINSLQKSLSDSNSELRCFALSALSDMKMSSLA), 153–186 (IILHTVKKLVTDPSAMVRGEVALAIIKLYRAGKN), 187–224 (DYHEELLDILKELMADTDPKVISCAVLAYKECYADHLE), and 524–561 (KICPDVLRRLIQNFSNEGPETRCQILVLSAKLLSYDID). Ser-693, Ser-698, Ser-724, and Ser-726 each carry phosphoserine. Disordered regions lie at residues 708–739 (FTSSSNAKLTGINDGDSNSISGKGNVNTFTSQ) and 763–809 (PRKI…HLEL). A compositionally biased stretch (polar residues) spans 722–739 (GDSNSISGKGNVNTFTSQ). Acidic residues predominate over residues 772–791 (ESSDEDEDESEESSDDDEYS). Residues 792–809 (DSSLGTSSSGTSSSHLEL) show a composition bias toward low complexity.

This sequence belongs to the adaptor complexes large subunit family. In terms of assembly, adaptor protein complex 3 (AP-3) is a heterotetramer composed of 2 large adaptins (APL5 and APL6), a medium adaptin (APM3) and a small adaptin (APS3). Pyrophosphorylated by 5-diphosphoinositol pentakisphosphate (5-IP7). Serine pyrophosphorylation is achieved by Mg(2+)-dependent, but enzyme independent transfer of a beta-phosphate from a inositol pyrophosphate to a pre-phosphorylated serine residue.

It is found in the golgi apparatus. The protein localises to the cytoplasmic vesicle. It localises to the clathrin-coated vesicle membrane. In terms of biological role, part of the AP-3 complex, an adaptor-related complex which is not clathrin-associated. The complex is associated with the Golgi region as well as more peripheral structures. It facilitates the budding of vesicles from the Golgi membrane and may be directly involved in trafficking to the vacuole. Required for the transport via the ALP pathway, which directs the transport of the cargo proteins PHO8 and VAM3 to the vacuole. The chain is AP-3 complex subunit beta (APL6) from Saccharomyces cerevisiae (strain ATCC 204508 / S288c) (Baker's yeast).